Here is a 653-residue protein sequence, read N- to C-terminus: Potassium voltage-gated channel subfamily A member 4 (653 aa).

The Cytoplasmic segment spans residues 1–304; that stretch reads MEVAMVSAES…LLFEYPESSS (304 aa). Residues 24–148 are disordered; it reads QARARERERL…RFYYSEDDHG (125 aa). Residues 36–52 are compositionally biased toward low complexity; it reads SRAAAAAAVAAATAAVE. The span at 81–97 shows a compositional bias: basic residues; the sequence is GSRRRRRQRSEKKKAHY. At serine 90 the chain carries Phosphoserine; by PKA. Residue serine 122 is modified to Phosphoserine. Positions 122–137 are enriched in acidic residues; that stretch reads SEEEEDEEEEEEEEEE. A helical transmembrane segment spans residues 305–326; that stretch reads PARGIAIVSVLVILISIVIFCL. The Extracellular portion of the chain corresponds to 327–370; sequence ETLPEFRDDRDLVMALSAGGHGGLLNDTSAPHLENSGHTIFNDP. Asparagine 352 carries an N-linked (GlcNAc...) asparagine glycan. The helical transmembrane segment at 371–392 threads the bilayer; that stretch reads FFIVETVCIVWFSFEFVVRCFA. Residues 393-403 lie on the Cytoplasmic side of the membrane; that stretch reads CPSQALFFKNI. The helical transmembrane segment at 404–424 threads the bilayer; sequence MNIIDIVSILPYFITLGTDLA. At 425–439 the chain is on the extracellular side; sequence QQQGGGNGQQQQAMS. Residues 440-460 form a helical; Voltage-sensor membrane-spanning segment; sequence FAILRIIRLVRVFRIFKLSRH. At 461–475 the chain is on the cytoplasmic side; sequence SKGLQILGHTLRASM. Residues 462-475 are S4-S5 linker; it reads KGLQILGHTLRASM. A helical transmembrane segment spans residues 476–497; sequence RELGLLIFFLFIGVILFSSAVY. The Extracellular segment spans residues 498–511; sequence FAEADEPTTHFQSI. Residues 512 to 523 constitute an intramembrane region (helical); that stretch reads PDAFWWAVVTMT. The short motif at 524–529 is the Selectivity filter element; that stretch reads TVGYGD. Residues 524–531 lie within the membrane without spanning it; sequence TVGYGDMK. At 532–538 the chain is on the extracellular side; the sequence is PITVGGK. The chain crosses the membrane as a helical span at residues 539-567; sequence IVGSLCAIAGVLTIALPVPVIVSNFNYFY. The Cytoplasmic portion of the chain corresponds to 568–653; the sequence is HRETENEEQT…SNAKAVETDV (86 aa). Residue serine 599 is modified to Phosphoserine; by PKA. The segment covering 629 to 640 has biased composition (basic and acidic residues); sequence CQGKGDDSETDK. Residues 629-653 form a disordered region; sequence CQGKGDDSETDKNNCSNAKAVETDV. A PDZ-binding motif is present at residues 651–653; sequence TDV.

This sequence belongs to the potassium channel family. A (Shaker) (TC 1.A.1.2) subfamily. Kv1.4/KCNA4 sub-subfamily. As to quaternary structure, homotetramer and heterotetramer of potassium channel proteins. Interacts with KCNAB1 and KCNAB2. Interacts with DLG1, DLG2 and DLG4 via their PDZ domains. Interacts with SIGMAR1. Detected in a complex with KCNA1. Interacts with KCNA2. Part of a complex containing KCNA1, KCNAB1 and LGI1. Interacts (via cytoplasmic N-terminal domain) with KCNRG. Expressed in brain, and at lower levels in the testis, lung, kidney, colon and heart. Detected in heart ventricle.

It is found in the cell membrane. Its subcellular location is the cell projection. It localises to the axon. The enzyme catalyses K(+)(in) = K(+)(out). Its activity is regulated as follows. Inhibited by 4-aminopyridine (4-AP), but not by tetraethylammonium (TEA) and charybdotoxin (CTX). Functionally, voltage-gated potassium channel that mediates transmembrane potassium transport in excitable membranes. Forms tetrameric potassium-selective channels through which potassium ions pass in accordance with their electrochemical gradient. The channel alternates between opened and closed conformations in response to the voltage difference across the membrane. Can form functional homotetrameric channels and heterotetrameric channels that contain variable proportions of KCNA1, KCNA2, KCNA4, KCNA5, and possibly other family members as well; channel properties depend on the type of alpha subunits that are part of the channel. Channel properties are modulated by cytoplasmic beta subunits that regulate the subcellular location of the alpha subunits and promote rapid inactivation. In vivo, membranes probably contain a mixture of heteromeric potassium channel complexes, making it difficult to assign currents observed in intact tissues to any particular potassium channel family member. Homotetrameric KCNA4 forms a potassium channel that opens in response to membrane depolarization, followed by rapid spontaneous channel closure. Likewise, a heterotetrameric channel formed by KCNA1 and KCNA4 shows rapid inactivation. This chain is Potassium voltage-gated channel subfamily A member 4 (KCNA4), found in Homo sapiens (Human).